Reading from the N-terminus, the 282-residue chain is MTNLSIHNFKLSLVAAVIGSAMVMTSSPVAAQQAMQPMQSMKIERGTILTQPGVFGVFTMFKLRPDWNKVPVAERKGAAEEVKKLIEKHKDNVLVDLYLTRGLETNSDFFFRINAYDLAKAQTFMREFRSTTVGKNADVFETLVGVTKPLNYISKDKSPGLNAGLSSATYSGPAPRYVIVIPVKKNAEWWNMSPEERLKEMEVHTTPTLAYLVNVKRKLYHSTGLDDTDFITYFETDDLTAFNNLMLSLAQVKENKFHVRWGSPTTLGTIHSPEDVIKALAD.

The first 31 residues, 1-31, serve as a signal peptide directing secretion; it reads MTNLSIHNFKLSLVAAVIGSAMVMTSSPVAA. Glu104 lines the Ca(2+) pocket. Residue His204 participates in heme binding. The active-site Proton acceptor is the Arg217. Ca(2+) contacts are provided by Asp226 and Thr265.

Belongs to the chlorite dismutase family. In terms of assembly, homopentamer. The cofactor is heme b.

Its subcellular location is the periplasm. It carries out the reaction chloride + O2 = chlorite. In terms of biological role, catalyzes the heme-dependent decomposition of chlorite to O(2) and chloride with high efficiency and specificity. Used to detoxify chlorite, a by-product of the reduction of perchlorate, a primarily anthropogenic pollutant, in perchlorate-respiring bacteria. The protein is Chlorite dismutase of Dechloromonas aromatica (strain RCB).